The following is a 131-amino-acid chain: Fimbrial assembly protein, serogroups C1 and C2 (131 aa).

The sequence is that of Fimbrial assembly protein, serogroups C1 and C2 (fimB) from Dichelobacter nodosus (Bacteroides nodosus).